A 459-amino-acid polypeptide reads, in one-letter code: tRNA modification GTPase MnmE (459 aa).

(6S)-5-formyl-5,6,7,8-tetrahydrofolate is bound by residues arginine 30, glutamate 93, and lysine 132. The TrmE-type G domain occupies 226–381 (GVTMAIVGKP…LEEKILESVK (156 aa)). Position 236 (asparagine 236) interacts with K(+). GTP is bound by residues 236 to 241 (NVGKST), 255 to 261 (TDIPGTT), and 280 to 283 (DTAG). Serine 240 contacts Mg(2+). 3 residues coordinate K(+): threonine 255, isoleucine 257, and threonine 260. Position 261 (threonine 261) interacts with Mg(2+). Lysine 459 contacts (6S)-5-formyl-5,6,7,8-tetrahydrofolate.

The protein belongs to the TRAFAC class TrmE-Era-EngA-EngB-Septin-like GTPase superfamily. TrmE GTPase family. Homodimer. Heterotetramer of two MnmE and two MnmG subunits. K(+) is required as a cofactor.

The protein localises to the cytoplasm. Functionally, exhibits a very high intrinsic GTPase hydrolysis rate. Involved in the addition of a carboxymethylaminomethyl (cmnm) group at the wobble position (U34) of certain tRNAs, forming tRNA-cmnm(5)s(2)U34. The chain is tRNA modification GTPase MnmE from Fervidobacterium nodosum (strain ATCC 35602 / DSM 5306 / Rt17-B1).